The primary structure comprises 1004 residues: Translation initiation factor IF-2 (1004 aa).

A disordered region spans residues 36-393 (SSTIEPPVVK…RQKRNEYESM (358 aa)). 2 stretches are compositionally biased toward low complexity: residues 62–157 (AAKP…AKPA) and 173–183 (AAKPGAEAPRP). 2 stretches are compositionally biased toward pro residues: residues 184 to 196 (GGMPRPMGKPAPK) and 219 to 236 (PRPGGGPRPGGGPRPGGG). Composition is skewed to gly residues over residues 237 to 249 (PRPQGQGRPGGQR) and 261 to 277 (GNRGGQRQGAGAGGPRP). Positions 279–303 (GGPRPQGGSRPQGGSAQGAQGAPSQ) are enriched in low complexity. Residues 330-373 (GKGGRGGQAGGGAGGGFNRGGGTGGGAGRGGRRGGTAGAFGRPG) are compositionally biased toward gly residues. The span at 377–386 (RRGRKSKRQK) shows a compositional bias: basic residues. The tr-type G domain maps to 499 to 671 (KRPPVVTVMG…VCLTADAELD (173 aa)). The segment at 508 to 515 (GHVDHGKT) is G1. A GTP-binding site is contributed by 508-515 (GHVDHGKT). A G2 region spans residues 533–537 (GITQG). The segment at 558-561 (DTPG) is G3. Residues 558–562 (DTPGH) and 612–615 (NKID) each bind GTP. Residues 612-615 (NKID) are G4. The segment at 648-650 (SAK) is G5.

It belongs to the TRAFAC class translation factor GTPase superfamily. Classic translation factor GTPase family. IF-2 subfamily.

It localises to the cytoplasm. In terms of biological role, one of the essential components for the initiation of protein synthesis. Protects formylmethionyl-tRNA from spontaneous hydrolysis and promotes its binding to the 30S ribosomal subunits. Also involved in the hydrolysis of GTP during the formation of the 70S ribosomal complex. The polypeptide is Translation initiation factor IF-2 (Corynebacterium glutamicum (strain ATCC 13032 / DSM 20300 / JCM 1318 / BCRC 11384 / CCUG 27702 / LMG 3730 / NBRC 12168 / NCIMB 10025 / NRRL B-2784 / 534)).